A 323-amino-acid polypeptide reads, in one-letter code: uncharacterized protein (323 aa).

Its subcellular location is the mitochondrion. This is an uncharacterized protein from Schizosaccharomyces pombe (strain 972 / ATCC 24843) (Fission yeast).